The primary structure comprises 425 residues: Enolase (425 aa).

Residue Gln-163 coordinates (2R)-2-phosphoglycerate. Glu-205 acts as the Proton donor in catalysis. Mg(2+)-binding residues include Asp-242, Glu-285, and Asp-312. Residues Lys-337, Arg-366, Ser-367, and Lys-388 each coordinate (2R)-2-phosphoglycerate. The Proton acceptor role is filled by Lys-337.

Belongs to the enolase family. Mg(2+) serves as cofactor.

The protein resides in the cytoplasm. It is found in the secreted. The protein localises to the cell surface. It catalyses the reaction (2R)-2-phosphoglycerate = phosphoenolpyruvate + H2O. Its pathway is carbohydrate degradation; glycolysis; pyruvate from D-glyceraldehyde 3-phosphate: step 4/5. Catalyzes the reversible conversion of 2-phosphoglycerate (2-PG) into phosphoenolpyruvate (PEP). It is essential for the degradation of carbohydrates via glycolysis. The sequence is that of Enolase from Acidiphilium cryptum (strain JF-5).